Consider the following 347-residue polypeptide: GTPase Obg (347 aa).

Residues 1–159 (MQFLDQAKIY…AWVWLRLKLL (159 aa)) form the Obg domain. A disordered region spans residues 124–144 (GRGNASYKSSTNRAPRQHGPG). The region spanning 160–327 (ADVGLVGLPN…ILDQLITMTG (168 aa)) is the OBG-type G domain. GTP contacts are provided by residues 166–173 (GLPNAGKS), 191–195 (FTTLH), 212–215 (DIPG), 279–282 (NKID), and 308–310 (SGA). Residues Ser-173 and Thr-193 each coordinate Mg(2+).

This sequence belongs to the TRAFAC class OBG-HflX-like GTPase superfamily. OBG GTPase family. As to quaternary structure, monomer. It depends on Mg(2+) as a cofactor.

It localises to the cytoplasm. An essential GTPase which binds GTP, GDP and possibly (p)ppGpp with moderate affinity, with high nucleotide exchange rates and a fairly low GTP hydrolysis rate. Plays a role in control of the cell cycle, stress response, ribosome biogenesis and in those bacteria that undergo differentiation, in morphogenesis control. The protein is GTPase Obg of Zymomonas mobilis subsp. mobilis (strain ATCC 31821 / ZM4 / CP4).